Here is a 157-residue protein sequence, read N- to C-terminus: SsrA-binding protein (157 aa).

The disordered stretch occupies residues 131–157 (KQLHDKRDTEKKRDWSREKGRIMRARG). Basic and acidic residues predominate over residues 132-151 (QLHDKRDTEKKRDWSREKGR).

The protein belongs to the SmpB family.

Its subcellular location is the cytoplasm. In terms of biological role, required for rescue of stalled ribosomes mediated by trans-translation. Binds to transfer-messenger RNA (tmRNA), required for stable association of tmRNA with ribosomes. tmRNA and SmpB together mimic tRNA shape, replacing the anticodon stem-loop with SmpB. tmRNA is encoded by the ssrA gene; the 2 termini fold to resemble tRNA(Ala) and it encodes a 'tag peptide', a short internal open reading frame. During trans-translation Ala-aminoacylated tmRNA acts like a tRNA, entering the A-site of stalled ribosomes, displacing the stalled mRNA. The ribosome then switches to translate the ORF on the tmRNA; the nascent peptide is terminated with the 'tag peptide' encoded by the tmRNA and targeted for degradation. The ribosome is freed to recommence translation, which seems to be the essential function of trans-translation. This Rhodopseudomonas palustris (strain BisB18) protein is SsrA-binding protein.